Consider the following 231-residue polypeptide: uncharacterized protein (231 aa).

Transmembrane regions (helical) follow at residues 36–56 (SLLA…SFFI), 58–78 (SQVT…ALQW), 83–103 (APLN…TLTP), 143–163 (FTVM…ASLL), and 170–190 (SIVN…YILY).

Belongs to the BI1 family.

It is found in the cell membrane. This is an uncharacterized protein from Campylobacter jejuni subsp. jejuni serotype O:2 (strain ATCC 700819 / NCTC 11168).